The primary structure comprises 484 residues: Magnesium transporter MRS2-3 (484 aa).

2 disordered regions span residues 1-40 and 141-186; these read MRGA…GRKK and TKPQ…QSLE. Positions 10–24 are enriched in polar residues; that stretch reads NFSTNPSTPNTGQPT. The stretch at 203–275 forms a coiled coil; the sequence is ACLEAASSSL…LLDDDEDMAE (73 aa). The tract at residues 286-320 is disordered; it reads LEDSSNSSMNESDTFEVDLPQGDEDDRLPPEFASE. Over residues 298 to 311 the composition is skewed to acidic residues; that stretch reads DTFEVDLPQGDEDD. Residues 416-436 traverse the membrane as a helical segment; it reads GVMLTTATLVMSAFIAVAGVF. Residues 437–439 carry the Required for magnesium transport activity motif; that stretch reads GMN. Residues 455–475 traverse the membrane as a helical segment; sequence FIWTVIGGSIGSICLYVGAIG.

It belongs to the CorA metal ion transporter (MIT) (TC 1.A.35.5) family. As to expression, expressed in the whole plant.

Its subcellular location is the membrane. Functionally, magnesium transporter that may mediate the influx of magnesium. The sequence is that of Magnesium transporter MRS2-3 (MRS2-3) from Arabidopsis thaliana (Mouse-ear cress).